The chain runs to 44 residues: Phosphatase RapA inhibitor (44 aa).

Positions 1-39 are excised as a propeptide; the sequence is MKSKWMSGLLLVAVGFSFTQVMVHAGETANTEGKTFHIA.

Belongs to the Phr family. In terms of assembly, interacts with RapA and inhibits its interaction with Spo0F. Post-translationally, secreted with a propeptide domain, which is cleaved in the cell wall by the secreted serine proteases subtilisin and Vpr to produce a mature signaling peptide. Contains a predicted signal peptide cleavage site in the N-terminal region, however the propeptide is probably subject to only one processing event, at the N-terminal end of the mature peptide.

It is found in the secreted. The protein resides in the cytoplasm. Inhibition of RapA requires a free carboxylate group at the C-terminal end of the PhrA pentapeptide. A free C-terminal carboxylic acid PhrA pentapeptide inhibits RapA phosphatase activity at a 1:1 ratio and is approximately 200 fold more active than a C-terminal amide peptide. Its function is as follows. Signaling molecule involved in the regulation of sporulation. Secreted during production, but the mature peptide acts intracellularly, indicating that it needs to be imported into the cell to function. Inhibitor of the RapA phosphatase activity. Does not act on RapB. The protein is Phosphatase RapA inhibitor of Bacillus subtilis (strain 168).